Here is a 428-residue protein sequence, read N- to C-terminus: Glutamine synthetase, chloroplastic (428 aa).

Residues 1–48 (MAQAVVPAMQCQVGAVRARPAAAAAAAGGRVWGVRRTGRGTSGFRVMA) constitute a chloroplast transit peptide. One can recognise a GS beta-grasp domain in the interval 75 to 155 (IIAEYIWVGG…VMCDTYTPAG (81 aa)). The interval 95-120 (TISKPVEDPSELPKWNYDGSSTGQAP) is disordered. One can recognise a GS catalytic domain in the interval 159–428 (PTNKRNRAAQ…LAAKKLALKV (270 aa)).

Belongs to the glutamine synthetase family. As to quaternary structure, homooctamer.

Its subcellular location is the plastid. It localises to the chloroplast. It catalyses the reaction L-glutamate + NH4(+) + ATP = L-glutamine + ADP + phosphate + H(+). In terms of biological role, light-modulated chloroplastic glutamine synthetase, encoded by a nuclear gene and expressed primarily in leaves, and which is responsible for the reassimilation of the ammonia generated by photorespiration. This Oryza sativa subsp. japonica (Rice) protein is Glutamine synthetase, chloroplastic.